An 85-amino-acid chain; its full sequence is Large ribosomal subunit protein bL27 (85 aa).

Belongs to the bacterial ribosomal protein bL27 family.

This Ruthia magnifica subsp. Calyptogena magnifica protein is Large ribosomal subunit protein bL27.